We begin with the raw amino-acid sequence, 294 residues long: Acetyl-coenzyme A carboxylase carboxyl transferase subunit beta (294 aa).

Residues 25-294 (VWTKCTSCEQ…PLVVPVDGSH (270 aa)) enclose the CoA carboxyltransferase N-terminal domain. The Zn(2+) site is built by C29, C32, C48, and C51. The C4-type zinc-finger motif lies at 29-51 (CTSCEQVLYSAELERNLEVCPKC).

The protein belongs to the AccD/PCCB family. In terms of assembly, acetyl-CoA carboxylase is a heterohexamer composed of biotin carboxyl carrier protein (AccB), biotin carboxylase (AccC) and two subunits each of ACCase subunit alpha (AccA) and ACCase subunit beta (AccD). Requires Zn(2+) as cofactor.

The protein resides in the cytoplasm. The enzyme catalyses N(6)-carboxybiotinyl-L-lysyl-[protein] + acetyl-CoA = N(6)-biotinyl-L-lysyl-[protein] + malonyl-CoA. It participates in lipid metabolism; malonyl-CoA biosynthesis; malonyl-CoA from acetyl-CoA: step 1/1. Component of the acetyl coenzyme A carboxylase (ACC) complex. Biotin carboxylase (BC) catalyzes the carboxylation of biotin on its carrier protein (BCCP) and then the CO(2) group is transferred by the transcarboxylase to acetyl-CoA to form malonyl-CoA. In Aliivibrio fischeri (strain ATCC 700601 / ES114) (Vibrio fischeri), this protein is Acetyl-coenzyme A carboxylase carboxyl transferase subunit beta.